The chain runs to 492 residues: Osmoregulated proline transporter OpuE (492 aa).

A run of 13 helical transmembrane segments spans residues 3–23, 40–60, 62–82, 125–145, 161–181, 190–210, 224–244, 271–291, 314–334, 365–385, 394–414, 424–444, and 449–469; these read IEII…GWYA, LGPF…WMLM, VPGA…GLTI, IVSA…GMVS, GLFL…FLAV, AIMF…VGGV, LLDI…AWGL, IGMS…LIGV, ILFH…AIMS, LVMI…LLSL, LVGY…LLSL, ALAA…TGLA, and VYEI…VSMI.

This sequence belongs to the sodium:solute symporter (SSF) (TC 2.A.21) family.

Its subcellular location is the cell membrane. It carries out the reaction L-proline(in) + Na(+)(in) = L-proline(out) + Na(+)(out). Catalyzes the uptake of extracellular proline under high-osmolarity growth conditions. Essential for the use of proline present in the environment as an osmoprotectant. In Bacillus subtilis (strain 168), this protein is Osmoregulated proline transporter OpuE.